The primary structure comprises 241 residues: Uridylate kinase (241 aa).

ATP is bound by residues 15–18, Gly58, and Arg62; that span reads KLSG. Residues Asp77 and 138–145 each bind UMP; that span reads TGNPYFTT. Thr165, Tyr171, and Asp174 together coordinate ATP.

It belongs to the UMP kinase family. As to quaternary structure, homohexamer.

The protein localises to the cytoplasm. It carries out the reaction UMP + ATP = UDP + ADP. Its pathway is pyrimidine metabolism; CTP biosynthesis via de novo pathway; UDP from UMP (UMPK route): step 1/1. Inhibited by UTP. Catalyzes the reversible phosphorylation of UMP to UDP. This is Uridylate kinase from Desulfotalea psychrophila (strain LSv54 / DSM 12343).